Reading from the N-terminus, the 258-residue chain is Probable splicing factor, arginine/serine-rich 3 (258 aa).

One can recognise an RRM 1 domain in the interval 9-83 (QKVYVGNLPG…RRIRVEFTRG (75 aa)). Disordered regions lie at residues 81–120 (TRGVGPRGPGGRPLQDGGDHRGGDFRGGRGGGRGGGPQRR) and 190–258 (AYIR…PSPQ). Basic and acidic residues predominate over residues 97 to 107 (GGDHRGGDFRG). The span at 108-117 (GRGGGRGGGP) shows a compositional bias: gly residues. The region spanning 123 to 197 (YRVIVEGLPP…ETAYIRVRED (75 aa)) is the RRM 2 domain. A compositionally biased stretch (basic and acidic residues) spans 208–223 (GRDRSRSRSPRAERRA). A compositionally biased stretch (basic residues) spans 228 to 246 (SPRRSRSRSRSRSRSRSRS). Residues 247 to 258 (ASRSPSRSPSPQ) show a composition bias toward low complexity.

The protein belongs to the splicing factor SR family. As to quaternary structure, interacts with spk-1. Post-translationally, directly phosphorylated by spk-1 in vitro on serine residues of the RS domain. In terms of tissue distribution, predominantly coexpressed with spk-1 in adult hermaphrodite germlines.

Its subcellular location is the nucleus. Functionally, plays an essential role in embryogenesis. The chain is Probable splicing factor, arginine/serine-rich 3 (rsp-3) from Caenorhabditis elegans.